Here is a 91-residue protein sequence, read N- to C-terminus: DNA-binding protein HU (91 aa).

This sequence belongs to the bacterial histone-like protein family. As to quaternary structure, homodimer.

In terms of biological role, histone-like DNA-binding protein which is capable of wrapping DNA to stabilize it, and thus to prevent its denaturation under extreme environmental conditions. The chain is DNA-binding protein HU (hup) from Streptococcus thermophilus.